The chain runs to 274 residues: Undecaprenyl-diphosphatase 1 (274 aa).

Transmembrane regions (helical) follow at residues 47–67 (QVFL…LYFN), 85–105 (VSMW…GIPF), 113–133 (FYNY…FIMI), 150–170 (ITYT…VFPG), 196–216 (FFLA…KFGL), 225–245 (ILFI…KFLM), and 253–273 (FKAF…YFLI).

It belongs to the UppP family.

The protein resides in the cell membrane. The enzyme catalyses di-trans,octa-cis-undecaprenyl diphosphate + H2O = di-trans,octa-cis-undecaprenyl phosphate + phosphate + H(+). Its function is as follows. Catalyzes the dephosphorylation of undecaprenyl diphosphate (UPP). Confers resistance to bacitracin. This is Undecaprenyl-diphosphatase 1 from Clostridium acetobutylicum (strain ATCC 824 / DSM 792 / JCM 1419 / IAM 19013 / LMG 5710 / NBRC 13948 / NRRL B-527 / VKM B-1787 / 2291 / W).